Consider the following 173-residue polypeptide: Nicotinamide-nucleotide adenylyltransferase (173 aa).

The protein belongs to the archaeal NMN adenylyltransferase family.

It is found in the cytoplasm. The enzyme catalyses beta-nicotinamide D-ribonucleotide + ATP + H(+) = diphosphate + NAD(+). Its pathway is cofactor biosynthesis; NAD(+) biosynthesis; NAD(+) from nicotinamide D-ribonucleotide: step 1/1. In Methanosarcina barkeri (strain Fusaro / DSM 804), this protein is Nicotinamide-nucleotide adenylyltransferase.